Here is a 427-residue protein sequence, read N- to C-terminus: Adenylosuccinate synthetase (427 aa).

GTP-binding positions include 12-18 (GDEGKGK) and 40-42 (GHT). Asp-13 acts as the Proton acceptor in catalysis. Positions 13 and 40 each coordinate Mg(2+). Residues 13 to 16 (DEGK), 38 to 41 (NAGH), Thr-128, Arg-142, Gln-223, Thr-238, and Arg-302 each bind IMP. Residue His-41 is the Proton donor of the active site. Residue 298-304 (VTTGRDR) participates in substrate binding. GTP-binding positions include Arg-304, 330–332 (KLD), and 412–414 (GVG).

It belongs to the adenylosuccinate synthetase family. As to quaternary structure, homodimer. Mg(2+) serves as cofactor.

It localises to the cytoplasm. It carries out the reaction IMP + L-aspartate + GTP = N(6)-(1,2-dicarboxyethyl)-AMP + GDP + phosphate + 2 H(+). It participates in purine metabolism; AMP biosynthesis via de novo pathway; AMP from IMP: step 1/2. In terms of biological role, plays an important role in the de novo pathway of purine nucleotide biosynthesis. Catalyzes the first committed step in the biosynthesis of AMP from IMP. The chain is Adenylosuccinate synthetase from Streptomyces griseus subsp. griseus (strain JCM 4626 / CBS 651.72 / NBRC 13350 / KCC S-0626 / ISP 5235).